A 1275-amino-acid polypeptide reads, in one-letter code: Inner capsid protein lambda-1 (1275 aa).

Basic residues predominate over residues Met1–Ser12. The disordered stretch occupies residues Met1–Pro149. Composition is skewed to basic and acidic residues over residues Asp18–Asn35 and Asn75–Lys117. The segment covering Ala118–Pro149 has biased composition (polar residues). A C2H2-type zinc finger spans residues Tyr181 to His203.

The protein belongs to the orthoreovirus lambda-1 protein family. As to quaternary structure, homodecamer; each decamer is made up of two conformers of VP2, called VP2A and VP2B. 12 homodecamers assemble to form an icosahedral capsid. Interacts with protein mu-NS; in viral inclusions. Requires Mg(2+) as cofactor. Mn(2+) is required as a cofactor.

The protein resides in the virion. It carries out the reaction ATP + H2O = ADP + phosphate + H(+). Functionally, inner capsid protein that self-assembles to form an icosahedral capsid with a T=2 symmetry, which consists of 120 copies of VP2, with channels at each of its five-fold vertices. This capsid constitutes the innermost concentric layer of the viral mature particle. Its function is as follows. Displays NTPase, RNA 5'-triphosphatase (RTPase) and RNA helicase activities. Helicase activity might be involved in unwinding or reannealing dsRNA during RNA synthesis. RTPase enzymatic activity represents the first step in RNA capping, which yields a 5'-diphosphorylated plus-strand RNA. In Reovirus type 3 (strain Dearing) (T3D), this protein is Inner capsid protein lambda-1 (L3).